A 113-amino-acid chain; its full sequence is Cell cycle protein GpsB (113 aa).

Residues Leu-32 to Ala-71 adopt a coiled-coil conformation.

It belongs to the GpsB family. Forms polymers through the coiled coil domains. Interacts with PBP1, MreC and EzrA.

The protein resides in the cytoplasm. Its function is as follows. Divisome component that associates with the complex late in its assembly, after the Z-ring is formed, and is dependent on DivIC and PBP2B for its recruitment to the divisome. Together with EzrA, is a key component of the system that regulates PBP1 localization during cell cycle progression. Its main role could be the removal of PBP1 from the cell pole after pole maturation is completed. Also contributes to the recruitment of PBP1 to the division complex. Not essential for septum formation. The sequence is that of Cell cycle protein GpsB from Lactiplantibacillus plantarum (strain ATCC BAA-793 / NCIMB 8826 / WCFS1) (Lactobacillus plantarum).